Reading from the N-terminus, the 337-residue chain is Probable E3 ubiquitin-protein ligase LUL1 (337 aa).

G2 carries N-myristoyl glycine lipidation. The DAR2 domain stretch occupies residues 139–255; it reads FTFDASMPGR…GEIKIEVVKQ (117 aa). The segment at 285 to 324 adopts an RING-type; atypical zinc-finger fold; that stretch reads CVVCLSEPRDTTVLPCRHMCMCSGCAKALRFQTNLCPVCR.

Belongs to the RING-type zinc finger family. LOG2 subfamily. Post-translationally, myristoylated (in vitro).

The catalysed reaction is S-ubiquitinyl-[E2 ubiquitin-conjugating enzyme]-L-cysteine + [acceptor protein]-L-lysine = [E2 ubiquitin-conjugating enzyme]-L-cysteine + N(6)-ubiquitinyl-[acceptor protein]-L-lysine.. It participates in protein modification; protein ubiquitination. In terms of biological role, acts as an E3 ubiquitin-protein ligase, or as part of E3 complex, which accepts ubiquitin from specific E2 ubiquitin-conjugating enzymes and then transfers it to substrates (in vitro). The protein is Probable E3 ubiquitin-protein ligase LUL1 (LUL1) of Arabidopsis thaliana (Mouse-ear cress).